Here is a 155-residue protein sequence, read N- to C-terminus: Small ribosomal subunit protein uS7 (155 aa).

It belongs to the universal ribosomal protein uS7 family. Part of the 30S ribosomal subunit. Contacts proteins S9 and S11.

Its function is as follows. One of the primary rRNA binding proteins, it binds directly to 16S rRNA where it nucleates assembly of the head domain of the 30S subunit. Is located at the subunit interface close to the decoding center, probably blocks exit of the E-site tRNA. This Desulforapulum autotrophicum (strain ATCC 43914 / DSM 3382 / VKM B-1955 / HRM2) (Desulfobacterium autotrophicum) protein is Small ribosomal subunit protein uS7.